An 87-amino-acid chain; its full sequence is MRSATFFLVSCVLMSFVLSHVKEVEAGLDPMAANLRVRKDIFIGGCGRDGNKTCMKDFVKKGGVMNKPISCECDNLGYEHLCRCNFS.

The first 26 residues, M1–A26, serve as a signal peptide directing secretion. 3 disulfides stabilise this stretch: C46/C73, C54/C82, and C71/C84.

It belongs to the DEFL family.

Its subcellular location is the secreted. In Arabidopsis thaliana (Mouse-ear cress), this protein is Putative defensin-like protein 235 (SCRL26).